The sequence spans 854 residues: Nucleolar MIF4G domain-containing protein 1 (854 aa).

The necessary for nucleolar localization and for targeting PPP1CA to the nucleolus stretch occupies residues 2-275 (PRNVPEVNGV…EEDPDWQVLQ (274 aa)). Ser-60 bears the Phosphoserine mark. Disordered stretches follow at residues 66–215 (ESRS…PLSF) and 231–333 (SGGG…GEKY). Residues 76 to 99 (PGGRKSRKELRKEKRHLRKARRLQ) are compositionally biased toward basic residues. Residues 104-113 (SGSGDQGGNV) show a composition bias toward gly residues. The segment covering 128 to 173 (VRPTPAKATATPAKASAPSTNTKASAAQPKAKAKGAPGKPGPATAT) has biased composition (low complexity). Basic and acidic residues predominate over residues 188–197 (REIRKLERCL). Positions 265 to 280 (SEEDPDWQVLQEDQED) are enriched in acidic residues. 3 stretches are compositionally biased toward basic and acidic residues: residues 281–291 (VNSKRRGEAES), 303–315 (RFAE…RSSS), and 322–331 (QESHSVESGE). A Required for efficient binding to PPP1CA and for targeting PPP1CA to the nucleolus motif is present at residues 301 to 304 (KVRF). A phosphoserine mark is found at Ser-311, Ser-314, and Ser-315. The 198-residue stretch at 356–553 (KKHVKGLINR…ETMLALKNND (198 aa)) folds into the MIF4G domain. In terms of domain architecture, MI spans 648–764 (DVRRIIFCTL…PLSVLKVVEF (117 aa)).

It belongs to the CWC22 family. As to quaternary structure, may interact with EIF4A1, EIF4A2 and EIF4A3. Interacts with PPP1CA and PPP1CC.

The protein localises to the nucleus. The protein resides in the nucleolus. Its function is as follows. Plays a role in targeting PPP1CA to the nucleolus. The polypeptide is Nucleolar MIF4G domain-containing protein 1 (Nom1) (Mus musculus (Mouse)).